The following is a 110-amino-acid chain: U32-theraphotoxin-Cg1a (110 aa).

An N-terminal signal peptide occupies residues 1-19; it reads MKHCFLILFTLIVFTVVWS. A propeptide spanning residues 20 to 43 is cleaved from the precursor; sequence LEENEEYPDEDEMIESFMDGYSYR. 4 cysteine pairs are disulfide-bonded: Cys49–Cys63, Cys56–Cys69, Cys60–Cys105, and Cys62–Cys80.

The protein belongs to the neurotoxin 03 (Tx2) family. 02 subfamily. As to expression, expressed by the venom gland.

The protein localises to the secreted. Probable ion channel inhibitor. This chain is U32-theraphotoxin-Cg1a, found in Chilobrachys guangxiensis (Chinese earth tiger tarantula).